Consider the following 432-residue polypeptide: Succinate--CoA ligase [GDP-forming] subunit beta, mitochondrial (432 aa).

Residues Met1 to Trp37 constitute a mitochondrion transit peptide. Residues Lys46–Phe274 enclose the ATP-grasp domain. Residue Gln57 participates in GTP binding. Residue Lys73 is modified to N6-acetyllysine. Lys78 carries the N6-succinyllysine modification. Residue Gly90–Gly92 participates in GTP binding. N6-acetyllysine occurs at positions 132 and 139. Residue Leu146 coordinates GTP. A Phosphoserine modification is found at Ser161. Lys200, Lys218, and Lys227 each carry N6-acetyllysine. Residues Asn243 and Asp257 each contribute to the Mg(2+) site. N6-acetyllysine occurs at positions 271 and 291. Substrate is bound at residue Asn308. Lys338 carries the post-translational modification N6-succinyllysine. Position 347 is an N6-acetyllysine (Lys347). Gly365–Val367 is a substrate binding site. Residues Lys386 and Lys423 each carry the N6-acetyllysine modification.

Belongs to the succinate/malate CoA ligase beta subunit family. GTP-specific subunit beta subfamily. As to quaternary structure, heterodimer of an alpha and a beta subunit. The beta subunit determines specificity for GTP. Mg(2+) is required as a cofactor. In terms of tissue distribution, mainly expressed in liver, kidney, heart, spleen and skeletal muscle. Also found in intestine and colon, and in low amounts in lung, brain, prostate, testis and ovary.

Its subcellular location is the mitochondrion. The enzyme catalyses GTP + succinate + CoA = succinyl-CoA + GDP + phosphate. The protein operates within carbohydrate metabolism; tricarboxylic acid cycle; succinate from succinyl-CoA (ligase route): step 1/1. In terms of biological role, GTP-specific succinyl-CoA synthetase functions in the citric acid cycle (TCA), coupling the hydrolysis of succinyl-CoA to the synthesis of GTP and thus represents the only step of substrate-level phosphorylation in the TCA. The beta subunit provides nucleotide specificity of the enzyme and binds the substrate succinate, while the binding sites for coenzyme A and phosphate are found in the alpha subunit. The sequence is that of Succinate--CoA ligase [GDP-forming] subunit beta, mitochondrial from Homo sapiens (Human).